The following is a 324-amino-acid chain: Quinolinate synthase (324 aa).

His39 and Ser56 together coordinate iminosuccinate. Cys101 lines the [4Fe-4S] cluster pocket. Residues 127 to 129 (YIN) and Ser144 each bind iminosuccinate. Residue Cys187 coordinates [4Fe-4S] cluster. Residues 213–215 (HPE) and Thr230 contribute to the iminosuccinate site. Cys280 lines the [4Fe-4S] cluster pocket.

It belongs to the quinolinate synthase family. Type 2 subfamily. [4Fe-4S] cluster is required as a cofactor.

The protein localises to the cytoplasm. The enzyme catalyses iminosuccinate + dihydroxyacetone phosphate = quinolinate + phosphate + 2 H2O + H(+). The protein operates within cofactor biosynthesis; NAD(+) biosynthesis; quinolinate from iminoaspartate: step 1/1. In terms of biological role, catalyzes the condensation of iminoaspartate with dihydroxyacetone phosphate to form quinolinate. This is Quinolinate synthase from Nostoc sp. (strain PCC 7120 / SAG 25.82 / UTEX 2576).